The chain runs to 71 residues: Sec-independent protein translocase protein TatA (71 aa).

Residues 1–21 (MGSFSIWHWLIVLVVVLLLFG) form a helical membrane-spanning segment. The tract at residues 47–71 (AEEAKTVEHRTDEPVGEVKQKASKS) is disordered. Residues 49 to 71 (EAKTVEHRTDEPVGEVKQKASKS) show a composition bias toward basic and acidic residues.

It belongs to the TatA/E family. In terms of assembly, the Tat system comprises two distinct complexes: a TatABC complex, containing multiple copies of TatA, TatB and TatC subunits, and a separate TatA complex, containing only TatA subunits. Substrates initially bind to the TatABC complex, which probably triggers association of the separate TatA complex to form the active translocon.

Its subcellular location is the cell inner membrane. In terms of biological role, part of the twin-arginine translocation (Tat) system that transports large folded proteins containing a characteristic twin-arginine motif in their signal peptide across membranes. TatA could form the protein-conducting channel of the Tat system. This is Sec-independent protein translocase protein TatA from Chelativorans sp. (strain BNC1).